Here is a 558-residue protein sequence, read N- to C-terminus: Eukaryotic translation initiation factor 3 subunit D (558 aa).

The segment at 296–310 (EFDLLTVNETSVEPP) is RNA gate. Residues 534–558 (DNTFESEGEEEDSDEEEQVKDAFQR) are disordered. A compositionally biased stretch (acidic residues) spans 537–551 (FESEGEEEDSDEEEQ).

Belongs to the eIF-3 subunit D family. As to quaternary structure, component of the eukaryotic translation initiation factor 3 (eIF-3) complex.

It is found in the cytoplasm. In terms of biological role, mRNA cap-binding component of the eukaryotic translation initiation factor 3 (eIF-3) complex, which is involved in protein synthesis of a specialized repertoire of mRNAs and, together with other initiation factors, stimulates binding of mRNA and methionyl-tRNAi to the 40S ribosome. The eIF-3 complex specifically targets and initiates translation of a subset of mRNAs involved in cell proliferation. In the eIF-3 complex, eif3d specifically recognizes and binds the 7-methylguanosine cap of a subset of mRNAs. This is Eukaryotic translation initiation factor 3 subunit D from Nasonia vitripennis (Parasitic wasp).